The sequence spans 353 residues: N-terminal EF-hand calcium-binding protein 3 (353 aa).

The 36-residue stretch at 27–62 (AGHALFQDVFRRADKNDDGKLSFEEFQNYFADGVLS) folds into the EF-hand domain. Ca(2+) is bound by residues aspartate 40, asparagine 42, aspartate 44, lysine 46, and glutamate 51. The required for interaction with APBA3 stretch occupies residues 172-181 (IKAQSRPCGS). Over residues 193 to 203 (SWSPSWSPGSS) the composition is skewed to low complexity. Positions 193–213 (SWSPSWSPGSSDTGRSSEAEQ) are disordered. Residues 204–213 (DTGRSSEAEQ) are compositionally biased toward polar residues. The ABM domain occupies 253–342 (LVAQRQVQVA…QAPDTLTTVF (90 aa)).

As to quaternary structure, interacts with the N-terminal domain of APBA2. Interacts with NEK2. Interacts with APBA3; APBA3 seems to mediate the interaction between NECAB3 and HIF1AN. In terms of processing, phosphorylated by NEK2. As to expression, widely expressed, with highest levels in the brain.

The protein localises to the golgi apparatus. Functionally, inhibits the interaction of APBA2 with amyloid-beta precursor protein (APP), and hence allows formation of amyloid-beta. May enhance the activity of HIF1A and thus promote glycolysis under normoxic conditions; the function requires its ABM domain and may implicate the stabilization of the interaction between HIF1AN and APBA3. This chain is N-terminal EF-hand calcium-binding protein 3 (Necab3), found in Mus musculus (Mouse).